The primary structure comprises 71 residues: Small ribosomal subunit protein bS21 (71 aa).

Belongs to the bacterial ribosomal protein bS21 family.

This Alcanivorax borkumensis (strain ATCC 700651 / DSM 11573 / NCIMB 13689 / SK2) protein is Small ribosomal subunit protein bS21.